Consider the following 726-residue polypeptide: Kinesin-like protein KIN-10B (726 aa).

Disordered stretches follow at residues M1–A20, A60–K82, and K402–R423. In terms of domain architecture, Kinesin motor spans G15 to V359. The segment covering F408–R423 has biased composition (polar residues).

This sequence belongs to the TRAFAC class myosin-kinesin ATPase superfamily. Kinesin family. KIN-10 subfamily.

The protein is Kinesin-like protein KIN-10B of Oryza sativa subsp. japonica (Rice).